The following is a 128-amino-acid chain: UPF0102 protein KPN78578_35270 (128 aa).

The disordered stretch occupies residues 1–20 (MAQVPAGKNRSGQLSKQTGD).

Belongs to the UPF0102 family.

This Klebsiella pneumoniae subsp. pneumoniae (strain ATCC 700721 / MGH 78578) protein is UPF0102 protein KPN78578_35270.